A 383-amino-acid chain; its full sequence is Chaperone protein DnaJ (383 aa).

One can recognise a J domain in the interval 5-70 (DYYEVLGVAK…EKRAAYDRFG (66 aa)). The segment at 139–217 (GKTETIRIPT…CSGAGRVNRE (79 aa)) adopts a CR-type zinc-finger fold. Residues Cys-152, Cys-155, Cys-169, Cys-172, Cys-191, Cys-194, Cys-205, and Cys-208 each contribute to the Zn(2+) site. CXXCXGXG motif repeat units follow at residues 152-159 (CEACSGTG), 169-176 (CSTCGGYG), 191-198 (CPNCHGRG), and 205-212 (CTACSGAG).

Belongs to the DnaJ family. Homodimer. Zn(2+) serves as cofactor.

It localises to the cytoplasm. Participates actively in the response to hyperosmotic and heat shock by preventing the aggregation of stress-denatured proteins and by disaggregating proteins, also in an autonomous, DnaK-independent fashion. Unfolded proteins bind initially to DnaJ; upon interaction with the DnaJ-bound protein, DnaK hydrolyzes its bound ATP, resulting in the formation of a stable complex. GrpE releases ADP from DnaK; ATP binding to DnaK triggers the release of the substrate protein, thus completing the reaction cycle. Several rounds of ATP-dependent interactions between DnaJ, DnaK and GrpE are required for fully efficient folding. Also involved, together with DnaK and GrpE, in the DNA replication of plasmids through activation of initiation proteins. In Methylorubrum populi (strain ATCC BAA-705 / NCIMB 13946 / BJ001) (Methylobacterium populi), this protein is Chaperone protein DnaJ.